We begin with the raw amino-acid sequence, 134 residues long: Small ribosomal subunit protein uS8c (134 aa).

The protein belongs to the universal ribosomal protein uS8 family. Part of the 30S ribosomal subunit.

Its subcellular location is the plastid. It is found in the chloroplast. One of the primary rRNA binding proteins, it binds directly to 16S rRNA central domain where it helps coordinate assembly of the platform of the 30S subunit. This is Small ribosomal subunit protein uS8c (rps8) from Lepidium virginicum (Virginia pepperweed).